The chain runs to 510 residues: Inositol-3-phosphate synthase (510 aa).

Gly70, Gly71, Asn72, Asn73, Asp143, Ile180, Gln190, Arg193, Thr230, Ala231, Asn232, Thr233, Gly281, Ser282, Asp306, Ser309, Asn340, Asn341, Asp342, Lys355, Ala393, Asp394, Asp422, and Ser423 together coordinate NAD(+).

The protein belongs to the myo-inositol 1-phosphate synthase family. It depends on NAD(+) as a cofactor.

The protein resides in the cytoplasm. Its subcellular location is the cytosol. The protein localises to the nucleus. The catalysed reaction is D-glucose 6-phosphate = 1D-myo-inositol 3-phosphate. It functions in the pathway polyol metabolism; myo-inositol biosynthesis; myo-inositol from D-glucose 6-phosphate: step 1/2. Functionally, key enzyme in myo-inositol biosynthesis pathway that catalyzes the conversion of glucose 6-phosphate to 1-myo-inositol 1-phosphate in a NAD-dependent manner. This is Inositol-3-phosphate synthase from Brassica napus (Rape).